Consider the following 852-residue polypeptide: Disks large homolog 2 (852 aa).

S-palmitoyl cysteine attachment occurs at residues Cys-5 and Cys-7. Ser-28 bears the Phosphoserine mark. Phosphotyrosine is present on Tyr-58. Ser-65 carries the phosphoserine modification. PDZ domains lie at 98–185 (EITL…RRRR) and 193–280 (EIKL…GKPT). Phosphoserine occurs at positions 307, 328, 360, 365, 406, and 414. One can recognise a PDZ 3 domain in the interval 421–502 (KVVLHKGSTG…TVTIIAQYQP (82 aa)). Position 505 is a phosphotyrosine (Tyr-505). Phosphoserine is present on residues Ser-528, Ser-530, and Ser-553. One can recognise an SH3 domain in the interval 536–606 (KRSLYVRAMF…PSKRRVERKE (71 aa)). A Guanylate kinase-like domain is found at 662 to 837 (TRPVIILGPM…IYNQCKLVIE (176 aa)). Residues Tyr-732 and Tyr-737 each carry the phosphotyrosine modification.

Interacts with NOS1/nNOS through second PDZ domain. Interacts with KCNJ2/Kir2.1 (via C-terminus) through one of its PDZ domains. Interacts with KCNJ4. Interacts with FRMPD4 (via C-terminus). Interacts through its PDZ domains with NETO1. Interacts with LRFN1, LRFN2 and LRFN4. Interacts with FASLG. Interacts with KCNJ4. Interacts with ADAM22. Interacts with DGKI (via PDZ-binding motif). Palmitoylation of isoform 1 and isoform 2 is not required for targeting to postsynaptic density. As to expression, brain. Highest levels of isoform 1 in cortex, olfactory bulb, thalamus, hypothalamus, striatum and hippocampus. Highest level of isoform 2 in olfactory bulb. Reduced levels in cortex and hippocampus. Highest level of isoform 4 in spinal cord. Low levels of isoform 4, isoform 6, and isoform 7 in superior cervical ganglion.

Its subcellular location is the cell membrane. The protein resides in the postsynaptic density. It is found in the synapse. The protein localises to the membrane. It localises to the cell projection. Its subcellular location is the axon. The protein resides in the perikaryon. Required for perception of chronic pain through NMDA receptor signaling. Regulates surface expression of NMDA receptors in dorsal horn neurons of the spinal cord. Interacts with the cytoplasmic tail of NMDA receptor subunits as well as inward rectifying potassium channels. Involved in regulation of synaptic stability at cholinergic synapses. Part of the postsynaptic protein scaffold of excitatory synapses. The polypeptide is Disks large homolog 2 (Dlg2) (Mus musculus (Mouse)).